Here is a 159-residue protein sequence, read N- to C-terminus: 6,7-dimethyl-8-ribityllumazine synthase (159 aa).

5-amino-6-(D-ribitylamino)uracil is bound by residues F22, 56–58 (AFE), and 80–82 (AVI). 85-86 (AT) contributes to the (2S)-2-hydroxy-3-oxobutyl phosphate binding site. H88 acts as the Proton donor in catalysis. F113 lines the 5-amino-6-(D-ribitylamino)uracil pocket. A (2S)-2-hydroxy-3-oxobutyl phosphate-binding site is contributed by R127.

The protein belongs to the DMRL synthase family.

The catalysed reaction is (2S)-2-hydroxy-3-oxobutyl phosphate + 5-amino-6-(D-ribitylamino)uracil = 6,7-dimethyl-8-(1-D-ribityl)lumazine + phosphate + 2 H2O + H(+). The protein operates within cofactor biosynthesis; riboflavin biosynthesis; riboflavin from 2-hydroxy-3-oxobutyl phosphate and 5-amino-6-(D-ribitylamino)uracil: step 1/2. Functionally, catalyzes the formation of 6,7-dimethyl-8-ribityllumazine by condensation of 5-amino-6-(D-ribitylamino)uracil with 3,4-dihydroxy-2-butanone 4-phosphate. This is the penultimate step in the biosynthesis of riboflavin. The sequence is that of 6,7-dimethyl-8-ribityllumazine synthase from Lactiplantibacillus plantarum (strain ATCC BAA-793 / NCIMB 8826 / WCFS1) (Lactobacillus plantarum).